Reading from the N-terminus, the 263-residue chain is HTH-type transcriptional repressor NanR (263 aa).

One can recognise an HTH gntR-type domain in the interval 30–98 (KKLSEMVEEE…NGERARVSRP (69 aa)). A DNA-binding region (H-T-H motif) is located at residues 58–77 (ERELMAFFNVGRPSVREALA).

The protein belongs to the NanR family.

Its function is as follows. Transcriptional repressor that controls expression of the genes required for the catabolism of sialic acids. In Salmonella bongori (strain ATCC 43975 / DSM 13772 / NCTC 12419), this protein is HTH-type transcriptional repressor NanR.